The chain runs to 441 residues: ATP-dependent RNA helicase sub2 (441 aa).

Over residues Asp19–Ala29 the composition is skewed to low complexity. Positions Asp19–Gly43 are disordered. The Q motif motif lies at Thr58–Gln86. The Helicase ATP-binding domain occupies Ile89–Val264. ATP is bound at residue Ala102–Thr109. Positions Asp211 to Asp214 match the DEAD box motif. Residues Gly276–Ser437 form the Helicase C-terminal domain.

The protein belongs to the DEAD box helicase family. DECD subfamily.

Its subcellular location is the nucleus. It catalyses the reaction ATP + H2O = ADP + phosphate + H(+). Its function is as follows. ATP-binding RNA helicase involved in transcription elongation and required for the export of mRNA out of the nucleus. SUB2 also plays a role in pre-mRNA splicing and spliceosome assembly. May be involved in rDNA and telomeric silencing, and maintenance of genome integrity. The protein is ATP-dependent RNA helicase sub2 (sub2) of Neosartorya fischeri (strain ATCC 1020 / DSM 3700 / CBS 544.65 / FGSC A1164 / JCM 1740 / NRRL 181 / WB 181) (Aspergillus fischerianus).